The chain runs to 567 residues: Cytochrome P450 monooxygenase 69 (567 aa).

Residues 7–24 (ELAALTVVLLATGVLFYA) form a helical membrane-spanning segment. N-linked (GlcNAc...) asparagine glycans are attached at residues Asn25, Asn81, Asn223, and Asn279. Cys475 contacts heme.

The protein belongs to the cytochrome P450 family. It depends on heme as a cofactor.

It is found in the membrane. It functions in the pathway secondary metabolite biosynthesis. Its function is as follows. Cytochrome P450 monooxygenase that is able to use 4-ethoxybenzoic acid as a substrate for oxidation. This Postia placenta (strain ATCC 44394 / Madison 698-R) (Brown rot fungus) protein is Cytochrome P450 monooxygenase 69.